A 3165-amino-acid polypeptide reads, in one-letter code: ORFB polyprotein (3165 aa).

In terms of domain architecture, Peptidase C8 spans 271-418 (MARSIGLSHE…LENEPDILVG (148 aa)). Active-site for papain-like protease p48 activity residues include Cys-341 and His-388. Residues 453–472 (AEPGQRAKDNTNPSTPRPIE) form a disordered region. 6 consecutive transmembrane segments (helical) span residues 791 to 811 (IMIASSVAFLVPLYFTLYVPY), 823 to 843 (YILLPPVLWLVWTNLCYGYAC), 1166 to 1186 (AGLFWWYGCLHLLPFMAAAIM), 1193 to 1213 (KYLVGMAWLTEPGLLMLKALW), 1215 to 1235 (FPIFMVTPRWMLPFIVTVSVY), and 1356 to 1376 (ALGFVFAYMVSWAVYLVLRPP). The tract at residues 1793 to 2208 (FYKSRKALKQ…AEDSADYRAW (416 aa)) is RNA-directed RNA polymerase. The next 3 membrane-spanning stretches (helical) occupy residues 2495 to 2515 (VRIYQGMTVIISAMYFAMHWV), 2517 to 2537 (LFIQSLFLIGPLYNLFMWSFW), and 2590 to 2610 (LGIVPVTLVLDGLAEIIEVLF). Residues 2651 to 2796 (ATKAIEHGHV…IPFLEPTLPK (146 aa)) enclose the Helicase ATP-binding domain. Position 2664 to 2671 (2664 to 2671 (AKTASGKS)) interacts with ATP. The short motif at 2751 to 2754 (DEFH) is the DEFH box element.

The protein in the C-terminal section; belongs to the DEAD box helicase family. In terms of processing, papain-like protease p48 is autocatalytically processed. The putative RNA-directed RNA polymerase/helicase may be further processed.

Its subcellular location is the host membrane. The catalysed reaction is RNA(n) + a ribonucleoside 5'-triphosphate = RNA(n+1) + diphosphate. It catalyses the reaction ATP + H2O = ADP + phosphate + H(+). In terms of biological role, papain-like protease p48 is a cysteine protease of the peptidase family C8. In Cryphonectria hypovirus 1 (strain EP713) (CHV-1/EP713), this protein is ORFB polyprotein.